The following is a 262-amino-acid chain: Indole-3-glycerol phosphate synthase (262 aa).

The protein belongs to the TrpC family.

The catalysed reaction is 1-(2-carboxyphenylamino)-1-deoxy-D-ribulose 5-phosphate + H(+) = (1S,2R)-1-C-(indol-3-yl)glycerol 3-phosphate + CO2 + H2O. It functions in the pathway amino-acid biosynthesis; L-tryptophan biosynthesis; L-tryptophan from chorismate: step 4/5. The polypeptide is Indole-3-glycerol phosphate synthase (Leptothrix cholodnii (strain ATCC 51168 / LMG 8142 / SP-6) (Leptothrix discophora (strain SP-6))).